A 416-amino-acid polypeptide reads, in one-letter code: Phosphoglycerate kinase (416 aa).

Substrate-binding positions include 28 to 30 (DMN), R44, 65 to 68 (HQSR), R122, and R162. ATP contacts are provided by residues E337 and 362 to 365 (GGHI).

This sequence belongs to the phosphoglycerate kinase family. In terms of assembly, monomer.

It is found in the cytoplasm. It catalyses the reaction (2R)-3-phosphoglycerate + ATP = (2R)-3-phospho-glyceroyl phosphate + ADP. Its pathway is carbohydrate degradation; glycolysis; pyruvate from D-glyceraldehyde 3-phosphate: step 2/5. In Methanosarcina mazei (strain ATCC BAA-159 / DSM 3647 / Goe1 / Go1 / JCM 11833 / OCM 88) (Methanosarcina frisia), this protein is Phosphoglycerate kinase.